The chain runs to 297 residues: Molybdate/tungstate import ATP-binding protein WtpC (297 aa).

Residues 2-226 (LKVNNLSKIW…PKNKKVAEFL (225 aa)) form the ABC transporter domain. Position 32–39 (32–39 (GPSGAGKS)) interacts with ATP.

This sequence belongs to the ABC transporter superfamily. Sulfate/tungstate importer (TC 3.A.1.6) family. In terms of assembly, the complex is composed of two ATP-binding proteins (WtpC), two transmembrane proteins (WtpB) and a solute-binding protein (WtpA).

Its subcellular location is the cell membrane. It carries out the reaction tungstate(in) + ATP + H2O = tungstate(out) + ADP + phosphate + H(+). Functionally, part of the ABC transporter complex WtpABC involved in molybdate/tungstate import. Responsible for energy coupling to the transport system. This is Molybdate/tungstate import ATP-binding protein WtpC (wtpC) from Methanocaldococcus jannaschii (strain ATCC 43067 / DSM 2661 / JAL-1 / JCM 10045 / NBRC 100440) (Methanococcus jannaschii).